The sequence spans 819 residues: MLENSTAVHGVRLSDSPEDPFLRKRLASNTQLNQKKIRFTENENDLSPERAQKEPVSIPHGRYTWSTSPDTDSSHLPSTPPTVDIPFHHPHTIHSPTFTLSVSPDSQSSSATHQNDYISSPHADFSFSPPASKIQSHEPLNDMAAVHPLRPSHVSGPLSPPEPKAASVDHSINPAYNASFRLPDGPLWTEGSENLPSLDIQLQLAHIYFIYAHGQPYVLFHRDSFMEALKSQRLPPVLVLAMCAVAIRFWQTDKYDKNELFEQWFNRASAIAMANFDKLDLVYVASFVMLSYVCAATSKYWMFAGMAIRMVVALHPNKTPNLPYYDRPDSPLPFEIRVQLTRRLFWDCFMLDRLNSLYCNTQFLNLEDIHVPLPMRETLFMYKAHAVTETLTGKPSSPDSFTNANPTTAPIVSRNAQDNMGMLAYMIRMVSIWGRVVRCLKSYSQKQSNPYPFWHAKSTFKQLDQELYEWEKNLPNRLRYSRQTLLSYHMMGQGGQFACLHLIFLQIHLYVHRYAASISSVPFSHVKSPPTVFENQSAVLASQCANAICRIIQDCTELSISLAAPFTASSAYLAGTVLLYHYITRGSEVQASKAAVHLPIAKRHLAQLSVYWPALGMYAKALDAIAFHQGALVTPSVPPVIATVSKTNTTNTGVQQRGNVGVTTTGSILTQSSPALPVQPVPLAYSKPAPTTKSSLTELAYNTNVSLPPRSPGTGSLAAGNLPNEKAPSLMTMVNGGPVPGDIGEASIPVVQNLQPSTAHVDPESDLGRVIKICDWYQSPSSDVLLSKPLQLNSSEEMEQQCIDLSRHNTLLNLSSYGI.

Residue serine 16 is modified to Phosphoserine. Disordered stretches follow at residues 28 to 83 and 96 to 134; these read SNTQ…PPTV and PTFT…ASKI. The segment at residues 36–63 is a DNA-binding region (zn(2)-C6 fungal-type); sequence KIRFTENENDLSPERAQKEPVSIPHGRY. Polar residues-rich tracts occupy residues 64 to 77 and 96 to 118; these read TWST…SHLP and PTFT…NDYI.

The protein resides in the nucleus. This is an uncharacterized protein from Schizosaccharomyces pombe (strain 972 / ATCC 24843) (Fission yeast).